The following is an 812-amino-acid chain: Phospholipase D alpha 1 (812 aa).

Residues 1–46 (MAQMLLHGTLHATIFEAASLSNPHRASGSAPKFIRKFVEGIEDTVG) constitute a propeptide that is removed on maturation. The C2 domain occupies 1-130 (MAQMLLHGTL…LNGEEIDRWL (130 aa)). Residue D190 participates in Ca(2+) binding. The PLD phosphodiesterase 1 domain occupies 330-368 (TMFTHHQKIVVVDHELPNQGSQQRRIVSFVGGLDLCDGR). Active-site residues include H335, K337, and D342. A 1,2-diacyl-sn-glycero-3-phosphate is bound at residue H335. Ca(2+) is bound by residues H374 and H408. Residues Q524 and H663 each coordinate a 1,2-diacyl-sn-glycero-3-phosphate. A PLD phosphodiesterase 2 domain is found at 658–685 (FMIYVHTKMMIVDDEYIIIGSANINQRS). Catalysis depends on residues H663, K665, and D670. E724 serves as a coordination point for Ca(2+).

This sequence belongs to the phospholipase D family. C2-PLD subfamily. As to quaternary structure, monomer. Requires Ca(2+) as cofactor. Expressed in leaves, roots, developing seeds and cultured cells.

It catalyses the reaction a 1,2-diacyl-sn-glycero-3-phosphocholine + H2O = a 1,2-diacyl-sn-glycero-3-phosphate + choline + H(+). In terms of biological role, hydrolyzes glycerol-phospholipids at the terminal phosphodiesteric bond. Plays an important role in various cellular processes. In Oryza sativa subsp. japonica (Rice), this protein is Phospholipase D alpha 1 (PLD1).